The following is a 142-amino-acid chain: Large ribosomal subunit protein bL17 (142 aa).

This sequence belongs to the bacterial ribosomal protein bL17 family. Part of the 50S ribosomal subunit. Contacts protein L32.

The sequence is that of Large ribosomal subunit protein bL17 from Wolbachia sp. subsp. Brugia malayi (strain TRS).